The sequence spans 601 residues: Beta-phellandrene synthase (601 aa).

The transit peptide at 1–35 (MSTISIHHVGILRNPLPSKNKRALINNPWSLSLPR) directs the protein to the chloroplast. Residues D356 and D360 each contribute to the Mn(2+) site. Residues 356 to 360 (DDVYD) carry the DDXXD motif motif. Homodimerization stretches follow at residues 362–368 (YGTLDEL) and 434–471 (EAEW…LSIP). Residues D499 and E507 each contribute to the Mn(2+) site.

It belongs to the terpene synthase family. Homodimer. Requires Mn(2+) as cofactor. Mg(2+) serves as cofactor. As to expression, expressed in peltate glandular trichomes. Present at low levels in flowers and stems.

It localises to the plastid. It is found in the chloroplast. The enzyme catalyses (2E)-geranyl diphosphate = beta-phellandrene + diphosphate. It carries out the reaction (2E)-geranyl diphosphate = (1R,5R)-sabinene + diphosphate. Its pathway is secondary metabolite biosynthesis; terpenoid biosynthesis. Functionally, involved in the biosynthesis of phenolic monoterpenes natural products. Monoterpene synthase that catalyzes mainly the formation of olefins such as sabinene and beta-phellandrene, and minor amounts of other monoterpenes (e.g. myrcene, gamma-terpinene, alpha-thujene and alpha-pinene) from geranyl diphosphate (GPP). The chain is Beta-phellandrene synthase from Origanum vulgare (Wild marjoram).